Reading from the N-terminus, the 123-residue chain is Thioredoxin domain-containing protein 17 (123 aa).

The region spanning 41 to 123 (SWCPDCVKAE…DLVRMMFTED (83 aa)) is the Thioredoxin domain. Catalysis depends on nucleophile residues Cys43 and Cys46. Cysteines 43 and 46 form a disulfide.

This sequence belongs to the thioredoxin family.

It localises to the cytoplasm. Functionally, disulfide reductase. May participate in various redox reactions through the reversible oxidation of its active center dithiol to a disulfide and catalyze dithiol-disulfide exchange reactions. Has peroxidase activity and may contribute to the elimination of cellular hydrogen peroxide. The polypeptide is Thioredoxin domain-containing protein 17 (txndc17) (Danio rerio (Zebrafish)).